The following is a 425-amino-acid chain: Proteinase-activated receptor 1 (425 aa).

Residues 1–21 (MGPRRLLLVAACFSLCGPLLS) form the signal peptide. A propeptide spanning residues 22–41 (ARTRARRPESKATNATLDPR) is cleaved from the precursor. 3 N-linked (GlcNAc...) asparagine glycosylation sites follow: Asn35, Asn62, and Asn75. Topologically, residues 42–102 (SFLLRNPNDK…SGYLTSSWLT (61 aa)) are extracellular. Residues 103–128 (LFVPSVYTGVFVVSLPLNIMAIVVFI) traverse the membrane as a helical segment. Residues 129 to 137 (LKMKVKKPA) are Cytoplasmic-facing. A helical membrane pass occupies residues 138 to 157 (VVYMLHLATADVLFVSVLPF). Over 158–176 (KISYYFSGSDWQFGSELCR) the chain is Extracellular. An intrachain disulfide couples Cys175 to Cys254. A helical membrane pass occupies residues 177–198 (FVTAAFYCNMYASILLMTVISI). Residues 199-218 (DRFLAVVYPMQSLSWRTLGR) lie on the Cytoplasmic side of the membrane. A helical membrane pass occupies residues 219 to 239 (ASFTCLAIWALAIAGVVPLLL). The Extracellular segment spans residues 240–268 (KEQTIQVPGLNITTCHDVLNETLLEGYYA). 2 N-linked (GlcNAc...) asparagine glycosylation sites follow: Asn250 and Asn259. A helical membrane pass occupies residues 269–288 (YYFSAFSAVFFFVPLIISTV). At 289 to 311 (CYVSIIRCLSSSAVANRSKKSRA) the chain is on the cytoplasmic side. The chain crosses the membrane as a helical span at residues 312–334 (LFLSAAVFCIFIICFGPTNVLLI). Topologically, residues 335-350 (AHYSFLSHTSTTEAAY) are extracellular. A helical membrane pass occupies residues 351-374 (FAYLLCVCVSSISCCIDPLIYYYA). At 375–425 (SSECQRYVYSILCCKESSDPSSYNSSGQLMASKMDTCSSNLNNSIYKKLLT) the chain is on the cytoplasmic side. Ser418 bears the Phosphoserine mark.

This sequence belongs to the G-protein coupled receptor 1 family. In terms of processing, proteolytic cleavage by thrombin generates a new N-terminus that functions as a tethered ligand. Also proteolytically cleaved by cathepsin CTSG. Cleavage at 41-Arg-|-Ser-42 by CTSG results in receptor activation while cleavage at 55-Phe-|-Trp-56 results in inhibition of receptor activation. Post-translationally, phosphorylated in the C-terminal tail; probably mediating desensitization prior to the uncoupling and internalization of the receptor. Platelets and vascular endothelial cells.

It localises to the cell membrane. Its function is as follows. High affinity receptor that binds the activated thrombin, leading to calcium release from intracellular stores. The thrombin-activated receptor signaling pathway is mediated through PTX-insensitive G proteins, activation of phospholipase C resulting in the production of 1D-myo-inositol 1,4,5-trisphosphate (InsP3) which binds to InsP3 receptors causing calcium release from the stores. In astrocytes, the calcium released into the cytosol allows the Ca(2+)-dependent release of L-glutamate into the synaptic cleft through BEST1, that targets the neuronal postsynaptic GRIN2A/NMDAR receptor resulting in the synaptic plasticity regulation. May play a role in platelets activation and in vascular development. Mediates up-regulation of pro-inflammatory cytokines, such as MCP-1/CCL2 and IL6, triggered by coagulation factor Xa (F10) in cardiac fibroblasts and umbilical vein endothelial cells. The protein is Proteinase-activated receptor 1 of Homo sapiens (Human).